The sequence spans 556 residues: 2-succinyl-5-enolpyruvyl-6-hydroxy-3-cyclohexene-1-carboxylate synthase (556 aa).

Belongs to the TPP enzyme family. MenD subfamily. As to quaternary structure, homodimer. Mg(2+) is required as a cofactor. Requires Mn(2+) as cofactor. It depends on thiamine diphosphate as a cofactor.

It catalyses the reaction isochorismate + 2-oxoglutarate + H(+) = 5-enolpyruvoyl-6-hydroxy-2-succinyl-cyclohex-3-ene-1-carboxylate + CO2. It functions in the pathway quinol/quinone metabolism; 1,4-dihydroxy-2-naphthoate biosynthesis; 1,4-dihydroxy-2-naphthoate from chorismate: step 2/7. The protein operates within quinol/quinone metabolism; menaquinone biosynthesis. In terms of biological role, catalyzes the thiamine diphosphate-dependent decarboxylation of 2-oxoglutarate and the subsequent addition of the resulting succinic semialdehyde-thiamine pyrophosphate anion to isochorismate to yield 2-succinyl-5-enolpyruvyl-6-hydroxy-3-cyclohexene-1-carboxylate (SEPHCHC). The protein is 2-succinyl-5-enolpyruvyl-6-hydroxy-3-cyclohexene-1-carboxylate synthase of Escherichia coli O45:K1 (strain S88 / ExPEC).